A 245-amino-acid chain; its full sequence is MRVGVLGAKGKVGSTMVAAVQAAEDLTLSAEVDAGDPLSLLTDGGTEAVIDFTHPDVVMGNLEFLVRNGIHAVVGTTGFTAERLAQVREWLADSPGTSVLVAPNFAIGAVLSMHFAKQAARFFDSAEVIELHHPHKADAPSGTATRTAKLIAEARKGLPPNPDATSTSLPGARGADVDGIPVHAVRLAGLVAHQEILFGTEGETLSIRHDSLDRTSFVPGVLLAVRRIREHPGLTVGLEPLLDLG.

Residues Gly7–Val12, Asp33, Gly75–Thr77, and Ala102–Phe105 contribute to the NAD(+) site. His132 acts as the Proton donor/acceptor in catalysis. His133 serves as a coordination point for (S)-2,3,4,5-tetrahydrodipicolinate. Residue Lys136 is the Proton donor of the active site. Gly142 to Thr143 serves as a coordination point for (S)-2,3,4,5-tetrahydrodipicolinate.

This sequence belongs to the DapB family.

Its subcellular location is the cytoplasm. The catalysed reaction is (S)-2,3,4,5-tetrahydrodipicolinate + NAD(+) + H2O = (2S,4S)-4-hydroxy-2,3,4,5-tetrahydrodipicolinate + NADH + H(+). It catalyses the reaction (S)-2,3,4,5-tetrahydrodipicolinate + NADP(+) + H2O = (2S,4S)-4-hydroxy-2,3,4,5-tetrahydrodipicolinate + NADPH + H(+). It functions in the pathway amino-acid biosynthesis; L-lysine biosynthesis via DAP pathway; (S)-tetrahydrodipicolinate from L-aspartate: step 4/4. Catalyzes the conversion of 4-hydroxy-tetrahydrodipicolinate (HTPA) to tetrahydrodipicolinate. The chain is 4-hydroxy-tetrahydrodipicolinate reductase from Mycolicibacterium paratuberculosis (strain ATCC BAA-968 / K-10) (Mycobacterium paratuberculosis).